Consider the following 660-residue polypeptide: MMQLNAGHSAPPGAWFDGAGVNFTLFSAHAEKVELCLFDESGNETRYALPARSGDVWHGYLPGARPGLRYGYRVHGPWNPAQGHRFNPAKLLLDPCARGVEGDVIDDPRLYGGIDTPDPRDNRDAMPKSVVMDDRYDWEDDAPPNIAWGETVIYEAHVRGLTRLHPDIPPALRGTYAALGHPAMIAWFQRLGITALELQPVAKFCSEPRLQRLGLANYWGYNPLALWAIETRYASQPAPQAALNEFRDAVKALHKAGIEVILDVVLNHSAELDLEGPTFSLRGIDNRSYYWIQDDGDYHNWTGCGNTLNLSHPAVVDYAIGCLKFWVEQCHVDGFRFDLATVMGRTPEFRQDAPLFEAMRRDRSLSAVKLIVEPWDIGPGGYQVGNYPPPFAEWNDRFRDDMRRFWLRSELDVGEVATRVAASADVYRRNGREPWACVNLVTAHDGFTLRDCVSFNGKHNEANGEDNRDGAWENHSNNHGYEGLGGGQSVQDARRASTHALLASLLLSQGTPMLLAGDEQGHSQHGNNNAYCQDNELTWFDWSQADEGLVAYTAALIRLRRQIPALTASRWWEENDGNVRWLNAAGAPMRPEEWHSGTRQLQILLSDRWLVTLNGRDEVSEIVLPEGEWRAVPPFAGEDNPVVMAVWHGPAHGVCVFRKS.

D338 serves as the catalytic Nucleophile. Residue E373 is the Proton donor of the active site. Over residues N460–W472 the composition is skewed to basic and acidic residues. The segment at N460 to E482 is disordered.

The protein belongs to the glycosyl hydrolase 13 family.

The enzyme catalyses Hydrolysis of (1-&gt;6)-alpha-D-glucosidic linkages to branches with degrees of polymerization of three or four glucose residues in limit dextrin.. It functions in the pathway glycan degradation; glycogen degradation. Functionally, removes maltotriose and maltotetraose chains that are attached by 1,6-alpha-linkage to the limit dextrin main chain, generating a debranched limit dextrin. In Cronobacter sakazakii (strain ATCC BAA-894) (Enterobacter sakazakii), this protein is Glycogen debranching enzyme.